A 295-amino-acid polypeptide reads, in one-letter code: MASLKDIRAQIESTKNTQQITKAMKLVSAAKLRKAQNNIVNMRPYALALRQVIADIAVTNKVSHPLMEKKEQVKNVLLVVITSDRGLCGAFNSNINKFAEAYYNSNKASLEKIDFLFVGRRGHDYFARRGIKAVDYITKLDKDISYELASKVANRVMNDYLEGSYDEVRIVHNEFKSAISQVVTAETLLPIDLGMTTFKKEADTASNFAVDMIFEPAPEQIIKELLEKHFELQVYRCMSESVAGEHGARMSAMENATNNAKEMINKLTLTYNKLRQEKITTELIEIVSGAEALKG.

This sequence belongs to the ATPase gamma chain family. F-type ATPases have 2 components, CF(1) - the catalytic core - and CF(0) - the membrane proton channel. CF(1) has five subunits: alpha(3), beta(3), gamma(1), delta(1), epsilon(1). CF(0) has three main subunits: a, b and c.

The protein resides in the cell inner membrane. Its function is as follows. Produces ATP from ADP in the presence of a proton gradient across the membrane. The gamma chain is believed to be important in regulating ATPase activity and the flow of protons through the CF(0) complex. This chain is ATP synthase gamma chain, found in Bdellovibrio bacteriovorus (strain ATCC 15356 / DSM 50701 / NCIMB 9529 / HD100).